A 281-amino-acid chain; its full sequence is Nucleotide-binding protein DNO_0399 (281 aa).

6-13 (GMSGAGKS) serves as a coordination point for ATP. A GTP-binding site is contributed by 55–58 (DARN).

It belongs to the RapZ-like family.

Functionally, displays ATPase and GTPase activities. This Dichelobacter nodosus (strain VCS1703A) protein is Nucleotide-binding protein DNO_0399.